A 676-amino-acid chain; its full sequence is Protein cereblon (676 aa).

Positions 1–11 (MDDEETAEIDE) are enriched in acidic residues. Disordered stretches follow at residues 1–78 (MDDE…TTAH), 118–194 (EDAG…AVPR), and 249–276 (DDANNADVINTVPDDTSEASPPPPLDVD). Low complexity-rich tracts occupy residues 12-33 (TSSSSTNTNTNATAMATATETA) and 125-139 (VPQNPTVATNTTPPA). The segment covering 156 to 177 (LVNNDSPSQASISSRHSGSDMS) has biased composition (polar residues). The Lon N-terminal domain occupies 314–542 (RMLIFMHQHI…IIGTTLKHES (229 aa)). A CULT domain is found at 541 to 650 (ESLFYCRYCN…LAGSSVRIGK (110 aa)). 4 residues coordinate Zn(2+): Cys-546, Cys-549, Cys-615, and Cys-618.

This sequence belongs to the CRBN family. Likely a component of a DCX (DDB1-CUL4-X-box) protein ligase complex. May interact with pic/DDB1. Post-translationally, ubiquitinated.

Its subcellular location is the nucleus. It functions in the pathway protein modification; protein ubiquitination. Substrate recognition component of a DCX (DDB1-CUL4-X-box) E3 protein ligase complex that mediates the ubiquitination and subsequent proteasomal degradation of target proteins. Has an essential role in mediating growth by negatively regulating insulin signaling. It also has a role in maintaining presynaptic function in the neuromuscular junction synapses of third-instar larvae. The protein is Protein cereblon of Drosophila mojavensis (Fruit fly).